A 292-amino-acid chain; its full sequence is Xanthine dehydrogenase FAD-binding subunit (292 aa).

Residues 1–176 form the FAD-binding PCMH-type domain; the sequence is MFDFASYHRA…VAFHFPPQPK (176 aa). Residues 27–34, 109–113, Ile165, and Phe184 each bind FAD; these read KLLAGGTD and ATYGG.

As to quaternary structure, heterotrimer of XdhA, XdhB and XdhC. FAD serves as cofactor.

It catalyses the reaction xanthine + NAD(+) + H2O = urate + NADH + H(+). The enzyme catalyses hypoxanthine + NAD(+) + H2O = xanthine + NADH + H(+). It functions in the pathway purine metabolism; hypoxanthine degradation; urate from hypoxanthine: step 1/2. Its pathway is purine metabolism; hypoxanthine degradation; urate from hypoxanthine: step 2/2. Its function is as follows. Presumed to be a dehydrogenase, but possibly an oxidase. Participates in limited purine salvage (requires aspartate) but does not support aerobic growth on purines as the sole carbon source (purine catabolism). This Escherichia coli O157:H7 protein is Xanthine dehydrogenase FAD-binding subunit (xdhB).